Reading from the N-terminus, the 303-residue chain is Flavin-dependent thymidylate synthase (303 aa).

Residues 1–21 (MALTSEQRAEIEAQRSEPQLT) form a disordered region. Positions 43 to 256 (GFLRVVDYMG…PATAAAFEEY (214 aa)) constitute a ThyX domain. FAD contacts are provided by residues Thr89, 112–114 (RHR), and Glu120. DUMP is bound by residues 109–112 (QWIR), 120–124 (EYSAR), and Arg195. The ThyX motif motif lies at 112–122 (RHRMASVNEYS). FAD contacts are provided by residues 211–213 (DLH) and His217. A dUMP-binding site is contributed by Arg222. The Involved in ionization of N3 of dUMP, leading to its activation role is filled by Arg222.

This sequence belongs to the thymidylate synthase ThyX family. In terms of assembly, homotetramer. FAD is required as a cofactor.

It carries out the reaction dUMP + (6R)-5,10-methylene-5,6,7,8-tetrahydrofolate + NADPH + H(+) = dTMP + (6S)-5,6,7,8-tetrahydrofolate + NADP(+). It functions in the pathway pyrimidine metabolism; dTTP biosynthesis. Catalyzes the reductive methylation of 2'-deoxyuridine-5'-monophosphate (dUMP) to 2'-deoxythymidine-5'-monophosphate (dTMP) while utilizing 5,10-methylenetetrahydrofolate (mTHF) as the methyl donor, and NADPH and FADH(2) as the reductant. The polypeptide is Flavin-dependent thymidylate synthase (Gluconobacter oxydans (strain 621H) (Gluconobacter suboxydans)).